A 117-amino-acid polypeptide reads, in one-letter code: Immunoglobulin heavy variable 4-28 (117 aa).

A signal peptide spans 1 to 19 (MKHLWFFLLLVAAPRWVLS). The interval 20–44 (QVQLQESGPGLVKPSDTLSLTCAVS) is framework-1. Residues 20-117 (QVQLQESGPG…VDTAVYYCAR (98 aa)) enclose the Ig-like domain. A disulfide bridge connects residues C41 and C115. The complementarity-determining-1 stretch occupies residues 45-53 (GYSISSSNW). Residues 54 to 70 (WGWIRQPPGKGLEWIGY) are framework-2. A complementarity-determining-2 region spans residues 71-77 (IYYSGST). The tract at residues 78–115 (YYNPSLKSRVTMSVDTSKNQFSLKLSSVTAVDTAVYYC) is framework-3. The tract at residues 116-117 (AR) is complementarity-determining-3.

In terms of assembly, immunoglobulins are composed of two identical heavy chains and two identical light chains; disulfide-linked.

The protein resides in the secreted. It is found in the cell membrane. V region of the variable domain of immunoglobulin heavy chains that participates in the antigen recognition. Immunoglobulins, also known as antibodies, are membrane-bound or secreted glycoproteins produced by B lymphocytes. In the recognition phase of humoral immunity, the membrane-bound immunoglobulins serve as receptors which, upon binding of a specific antigen, trigger the clonal expansion and differentiation of B lymphocytes into immunoglobulins-secreting plasma cells. Secreted immunoglobulins mediate the effector phase of humoral immunity, which results in the elimination of bound antigens. The antigen binding site is formed by the variable domain of one heavy chain, together with that of its associated light chain. Thus, each immunoglobulin has two antigen binding sites with remarkable affinity for a particular antigen. The variable domains are assembled by a process called V-(D)-J rearrangement and can then be subjected to somatic hypermutations which, after exposure to antigen and selection, allow affinity maturation for a particular antigen. The sequence is that of Immunoglobulin heavy variable 4-28 from Homo sapiens (Human).